The primary structure comprises 285 residues: Nurim (285 aa).

Residues 1–16 (MSANVQVSGQLSSGPS) are Nuclear-facing. A helical membrane pass occupies residues 17 to 44 (LPACIVLSAVSLLCFVAGFGTGAEFVRF). At 45–74 (LSFGAIFRNISGGLDGEIPLTWSEAIRNTQ) the chain is on the perinuclear space side. A helical transmembrane segment spans residues 75-96 (FQCCIGIDIGLLFLFVLQHSLM). Residues 97–113 (AWTAVKKNVLHVFGVLQ) are Nuclear-facing. A helical membrane pass occupies residues 114-130 (RSIYILCTALSLQVLMR). The Perinuclear space segment spans residues 131–149 (FWQPCPHGPYLWNVSSDPW). Residues 150–180 (SAWLPLLCALVHTISWLLIFSVLLIFDYAEL) form a helical membrane-spanning segment. Residues 181–207 (MGIKQVYYFCLGMGDPLSHKSPRVARL) are Nuclear-facing. The chain crosses the membrane as a helical span at residues 208–226 (YAHLRHPIYLELLLILWAV). Topologically, residues 227-232 (PCLPPD) are perinuclear space. The helical transmembrane segment at 233–250 (RLILAIFFTLYLSLVHRL) threads the bilayer. Over 251 to 285 (DVQDYAYLRSQLEKKFLLFSREEASAVGGQIRKNN) the chain is Nuclear.

It belongs to the nurim family.

It is found in the nucleus inner membrane. In Xenopus laevis (African clawed frog), this protein is Nurim (nrm).